The sequence spans 114 residues: Large ribosomal subunit protein bL17 (114 aa).

Belongs to the bacterial ribosomal protein bL17 family. In terms of assembly, part of the 50S ribosomal subunit. Contacts protein L32.

The polypeptide is Large ribosomal subunit protein bL17 (Halothermothrix orenii (strain H 168 / OCM 544 / DSM 9562)).